Reading from the N-terminus, the 98-residue chain is ESAT-6-like protein EsxM (98 aa).

This sequence belongs to the WXG100 family. CFP-10 subfamily.

The protein resides in the secreted. This is ESAT-6-like protein EsxM (esxM) from Mycobacterium bovis (strain ATCC BAA-935 / AF2122/97).